Consider the following 187-residue polypeptide: Large ribosomal subunit protein uL6 (187 aa).

It belongs to the universal ribosomal protein uL6 family. As to quaternary structure, part of the 50S ribosomal subunit.

Its function is as follows. This protein binds to the 23S rRNA, and is important in its secondary structure. It is located near the subunit interface in the base of the L7/L12 stalk, and near the tRNA binding site of the peptidyltransferase center. The sequence is that of Large ribosomal subunit protein uL6 from Roseiflexus sp. (strain RS-1).